A 356-amino-acid polypeptide reads, in one-letter code: Alanine racemase, catabolic (356 aa).

The Proton acceptor; specific for D-alanine role is filled by K35. Position 35 is an N6-(pyridoxal phosphate)lysine (K35). R130 is a substrate binding site. Y253 (proton acceptor; specific for L-alanine) is an active-site residue. M301 lines the substrate pocket.

This sequence belongs to the alanine racemase family. The cofactor is pyridoxal 5'-phosphate.

The enzyme catalyses L-alanine = D-alanine. In terms of biological role, isomerizes L-alanine to D-alanine which is then oxidized to pyruvate by DadA. The protein is Alanine racemase, catabolic (dadX) of Escherichia coli O6:H1 (strain CFT073 / ATCC 700928 / UPEC).